Here is a 576-residue protein sequence, read N- to C-terminus: Trehalase 2 (576 aa).

This sequence belongs to the glycosyl hydrolase 15 family.

The catalysed reaction is alpha,alpha-trehalose + H2O = alpha-D-glucose + beta-D-glucose. The protein operates within glycan degradation; trehalose degradation; D-glucose from alpha,alpha-trehalose: step 1/1. Catalyzes the hydrolysis of alpha,alpha-trehalose into two molecules of D-glucose. This chain is Trehalase 2 (treH2), found in Sulfolobus acidocaldarius (strain ATCC 33909 / DSM 639 / JCM 8929 / NBRC 15157 / NCIMB 11770).